Reading from the N-terminus, the 180-residue chain is Small ribosomal subunit protein uS4 (180 aa).

The 63-residue stretch at 103–165 folds into the S4 RNA-binding domain; it reads RRLQTLVYKK…KNSPFAKESH (63 aa).

The protein belongs to the universal ribosomal protein uS4 family. Part of the 30S ribosomal subunit. Contacts protein S5. The interaction surface between S4 and S5 is involved in control of translational fidelity.

One of the primary rRNA binding proteins, it binds directly to 16S rRNA where it nucleates assembly of the body of the 30S subunit. In terms of biological role, with S5 and S12 plays an important role in translational accuracy. The chain is Small ribosomal subunit protein uS4 from Thermococcus gammatolerans (strain DSM 15229 / JCM 11827 / EJ3).